The chain runs to 84 residues: Envelope small membrane protein (84 aa).

Topologically, residues 1–18 (MFMADAYLADTVWYVGQI) are virion surface. Residues 19-39 (IFIVAICLLVIIVVVAFLATF) traverse the membrane as a helical segment. Over 40–80 (KLCIQLCGMCNTLVLSPSIYVFNRGRQFYEFYNDVKPPVLD) the chain is Intravirion.

It belongs to the betacoronaviruses E protein family. In terms of assembly, homopentamer. Interacts with membrane protein M in the budding compartment of the host cell, which is located between endoplasmic reticulum and the Golgi complex. Interacts with Nucleoprotein.

Its subcellular location is the host Golgi apparatus membrane. Its function is as follows. Plays a central role in virus morphogenesis and assembly. Acts as a viroporin and self-assembles in host membranes forming pentameric protein-lipid pores that allow ion transport. Also plays a role in the induction of apoptosis. In Porcine hemagglutinating encephalomyelitis virus (strain 67N) (HEV-67N), this protein is Envelope small membrane protein.